Here is a 458-residue protein sequence, read N- to C-terminus: Transcription factor bHLH10 (458 aa).

The segment at 1–49 (MEEERESLYEEMGCFDPNTPAEVTVESSFSQAEPPPPPPQVLVAGSTSN) is disordered. In terms of domain architecture, bHLH spans 243–292 (SRKSRTSPTERERRVHFNDRFFDLKNLIPNPTKIDRASIVGEAIDYIKEL). Residues 315 to 338 (KRARVGEGGGGEDQEEEEDTVNYK) form a disordered region. A compositionally biased stretch (acidic residues) spans 324–334 (GGEDQEEEEDT).

As to quaternary structure, homodimer.

It is found in the nucleus. This Arabidopsis thaliana (Mouse-ear cress) protein is Transcription factor bHLH10 (BHLH10).